The following is a 96-amino-acid chain: Prokineticin Bm8-b (96 aa).

A signal peptide spans 1–19 (MKCFAQIVVLLLVIAFSHG). Cystine bridges form between C32-C50, C37-C78, C60-C86, and C80-C95.

It belongs to the AVIT (prokineticin) family. In terms of tissue distribution, expressed by the skin glands.

The protein localises to the secreted. Functionally, potent agonist for both PKR1/PROKR1 and PKR2/PROKR2, and inducer of a potent and long-lasting hyperalgesia. Also potentiates capsaicin-induced TRPV1 current, when tested on DRG neurons. At subnanomolar concentrations, this protein both induces potent chemotaxis of macrophages and stimulates LPS-induced production of the pro-inflammatory cytokines IL-1 and IL-12. In vivo, potently stimulates the contraction of the guinea-pig gastrointestinal (GI) smooth muscle (nanomolar concentration). This is Prokineticin Bm8-b from Bombina maxima (Giant fire-bellied toad).